We begin with the raw amino-acid sequence, 94 residues long: MGRSSKKGPYIDPKLKKKIDELNRTGERRVIRTWARDCTIFPEMVGHTIAVHDGRRHVPIYITEQMVGHKLGEFAPTRTYRGHGKDAERTTRRR.

The tract at residues 73–94 (EFAPTRTYRGHGKDAERTTRRR) is disordered. Residues 83–94 (HGKDAERTTRRR) show a composition bias toward basic and acidic residues.

Belongs to the universal ribosomal protein uS19 family.

Functionally, protein S19 forms a complex with S13 that binds strongly to the 16S ribosomal RNA. The polypeptide is Small ribosomal subunit protein uS19 (Thermomicrobium roseum (strain ATCC 27502 / DSM 5159 / P-2)).